Consider the following 558-residue polypeptide: MNESFAQLFEESLKEIKTRPGSIIRGTIVSIEKDMVLVDAGLKSESAIPVEQFQNSQGLLDIQVGDQIDVALDAIEDGFGETLLSREKAKRHEAWLILEKAHEKSETVIGIINGKVKGGFTVELNDIRAFLPGSLVDVRPVRDTIHLEGKELEFKVIKLDQKRNNVVVSRRAVIESENSAERDQLLENLQEGMHVKGIVKNLTDYGAFVDLGGVDGLLHITDMAWKRVKHPSEIVNVGDEINIKILKFDRERTRVSLGLKQLGEDPWIAISKRYPEETKLSGRVTNLTDYGCFVEIEEGVEGLVHVSEMDWTNKNIHPSKVVTVNDVVEVMVLDIDEERRRISLGLKQCKINPWKEFSETHKKGVHVLGKIKSITDFGIFIGLNGGIDGLVHLSDISWTIPGEEAVVKYKKNDEISAVVLQVDAERERISLGIKQLEEDPFNTYIANHKKGAIITGIIKSLDKKNIIVKLPENLEGVIKLTEITRVYSETMINKLKIEDKILVKLSSFDRKNRIIYLTIHMIDEDEKKDLTAPSNNKTNDDSFSNVMTEAFKAAKNTE.

S1 motif domains follow at residues 21 to 87, 105 to 171, 192 to 260, 277 to 347, 364 to 434, and 451 to 520; these read GSII…LSRE, SETV…VSRR, GMHV…LGLK, ETKL…LGLK, GVHV…LGIK, and GAII…LTIH.

The protein belongs to the bacterial ribosomal protein bS1 family.

In terms of biological role, binds mRNA; thus facilitating recognition of the initiation point. It is needed to translate mRNA with a short Shine-Dalgarno (SD) purine-rich sequence. The polypeptide is Small ribosomal subunit protein bS1 (rpsA) (Buchnera aphidicola subsp. Acyrthosiphon pisum (strain APS) (Acyrthosiphon pisum symbiotic bacterium)).